A 187-amino-acid chain; its full sequence is GTP cyclohydrolase 1 (187 aa).

Zn(2+)-binding residues include C79, H82, and C150.

Belongs to the GTP cyclohydrolase I family. As to quaternary structure, toroid-shaped homodecamer, composed of two pentamers of five dimers.

The enzyme catalyses GTP + H2O = 7,8-dihydroneopterin 3'-triphosphate + formate + H(+). It functions in the pathway cofactor biosynthesis; 7,8-dihydroneopterin triphosphate biosynthesis; 7,8-dihydroneopterin triphosphate from GTP: step 1/1. This chain is GTP cyclohydrolase 1, found in Fusobacterium nucleatum subsp. nucleatum (strain ATCC 25586 / DSM 15643 / BCRC 10681 / CIP 101130 / JCM 8532 / KCTC 2640 / LMG 13131 / VPI 4355).